The primary structure comprises 244 residues: ATP synthase subunit a (244 aa).

7 consecutive transmembrane segments (helical) span residues 20-40 (FFDI…VIVI), 81-101 (GILF…LNVM), 113-133 (QLLV…IWGF), 140-160 (FLNI…LVFI), 176-196 (LFAN…AAIY), 202-222 (FIGI…LGIA), and 223-243 (FLQA…IINL).

It belongs to the ATPase A chain family. F-type ATPases have 2 components, CF(1) - the catalytic core - and CF(0) - the membrane proton channel. CF(1) has five subunits: alpha(3), beta(3), gamma(1), delta(1), epsilon(1). CF(0) has three main subunits: a, b and c.

Its subcellular location is the mitochondrion inner membrane. In terms of biological role, mitochondrial membrane ATP synthase (F(1)F(0) ATP synthase or Complex V) produces ATP from ADP in the presence of a proton gradient across the membrane which is generated by electron transport complexes of the respiratory chain. F-type ATPases consist of two structural domains, F(1) - containing the extramembraneous catalytic core and F(0) - containing the membrane proton channel, linked together by a central stalk and a peripheral stalk. During catalysis, ATP synthesis in the catalytic domain of F(1) is coupled via a rotary mechanism of the central stalk subunits to proton translocation. Key component of the proton channel; it may play a direct role in the translocation of protons across the membrane. This chain is ATP synthase subunit a (atp6), found in Dictyostelium discoideum (Social amoeba).